The following is a 358-amino-acid chain: G-protein coupled receptor 62 (358 aa).

At 1 to 17 (MANGSGLSVTELAGSVG) the chain is on the extracellular side. A glycan (N-linked (GlcNAc...) asparagine) is linked at Asn-3. The helical transmembrane segment at 18 to 38 (FILAVLVEVGAVLGNGTLLVV) threads the bilayer. Residues 39 to 53 (VLRTPDLQDAFYLAH) are Cytoplasmic-facing. Residues 54-74 (LCVVDLLAAASIMPLGLLAAP) form a helical membrane-spanning segment. Topologically, residues 75-89 (PGLGTVPLDPSSCRA) are extracellular. A helical membrane pass occupies residues 90–110 (ARFLSAALLPACTLGVAALGL). Topologically, residues 111–128 (ARYRLIVHPLRPGARPAP) are cytoplasmic. A helical transmembrane segment spans residues 129–149 (ALVLTAVWSAAALLGALSLLG). The Extracellular segment spans residues 150-176 (PPPAPPPAPARCSVLAGGLGPFRPLWA). The chain crosses the membrane as a helical span at residues 177 to 197 (MLAFALPALLLLAAYGSIFLV). The Cytoplasmic segment spans residues 198 to 234 (ARRAALRPPRGTRPRSDSLDSRLSFLPPLRPRLLGGK). A helical membrane pass occupies residues 235–255 (AALAPALAVGQFAACWLPYGC). At 256-268 (ACLAPAARAAAAE) the chain is on the extracellular side. The helical transmembrane segment at 269–289 (ATVTWVAYSAFAAHPFLYGLL) threads the bilayer. Over 290 to 358 (QRPVRLALGR…RQTPSVSEAT (69 aa)) the chain is Cytoplasmic. A disordered region spans residues 334-358 (VLGPSEAPEQARELARQTPSVSEAT).

This sequence belongs to the G-protein coupled receptor 1 family. Homodimer. Forms heterodimer with MTNR1B. Interacts with ARRB1 and ARRB2 in a spontaneous and agonist-independent manner; leading to the internalization of GPR62 in the endosomal compartment. As to expression, expressed in the brain and testes. Expressed widely, in the brain, including the cerebral cortex, cerebellum, hippocampus,thalamus and pituitary gland. In the testes, expressed specifically in the germ cells.

Its subcellular location is the cell membrane. The protein localises to the endosome membrane. Its function is as follows. Orphan G-protein coupled receptor. Constitutively activates the G(q/11)/inositol phosphate and the G(s)-alpha/cAMP signaling pathways. Has spontaneous activity for beta-arrestin recruitment. Shows a reciprocal regulatory interaction with the melatonin receptor MTNR1B most likely through receptor heteromerization. This is G-protein coupled receptor 62 (Gpr62) from Mus musculus (Mouse).